Consider the following 132-residue polypeptide: MATRHQVRQSIVSLLYAAQLNQENKDFINEFLDEKKIRNDQRKFTLDLYNGINEQLALLDEKINECLKEHKLDGVASIEKAILRLGAYEILFTSTQKAIIINEAIELAKEMAGDNAPKFINGVLDKINKEVQ.

The protein belongs to the NusB family.

In terms of biological role, involved in transcription antitermination. Required for transcription of ribosomal RNA (rRNA) genes. Binds specifically to the boxA antiterminator sequence of the ribosomal RNA (rrn) operons. This Campylobacter lari (strain RM2100 / D67 / ATCC BAA-1060) protein is Transcription antitermination protein NusB.